A 503-amino-acid chain; its full sequence is Dentin matrix acidic phosphoprotein 1 (503 aa).

A signal peptide spans 1–16 (MKTVILLVFLWGLSCA). The span at 23 to 35 (HNTESESSEERTG) shows a compositional bias: basic and acidic residues. The segment at 23 to 503 (HNTESESSEE…QDDNDCQDGY (481 aa)) is disordered. Residues 54–63 (QASPEGQANS) are compositionally biased toward polar residues. A compositionally biased stretch (acidic residues) spans 98–119 (KEDDEDDSGDDTFGDEDNDLGP). Positions 138–150 (DTTQSSEDSTSQE) are enriched in low complexity. Residues 158–175 (SDSKDHDSEDEADSRPEA) show a composition bias toward basic and acidic residues. Acidic residues predominate over residues 203 to 215 (SEFDDEGMQSDDP). Basic and acidic residues-rich tracts occupy residues 233 to 243 (RSEESKGDHEP), 267 to 286 (HVSE…RETQ), and 293 to 303 (TASKEESRSES). Residues 332–348 (EPSQESSSESQEGVTSE) show a composition bias toward low complexity. The short motif at 350–352 (RGD) is the Cell attachment site element. Residue asparagine 356 is glycosylated (N-linked (GlcNAc...) asparagine). Positions 362–373 (DQEDSESSEEDS) are enriched in acidic residues. N-linked (GlcNAc...) asparagine glycosylation is present at asparagine 394. The segment covering 407-418 (AQDGDSSSQEGL) has biased composition (polar residues). The span at 419-435 (QSQSASTESRSQESQSE) shows a compositional bias: low complexity. Residue asparagine 457 is glycosylated (N-linked (GlcNAc...) asparagine). A compositionally biased stretch (basic and acidic residues) spans 467-492 (EDIRPKNMEADSRKLIVDAYHNKPIG). Residues 493–503 (DQDDNDCQDGY) show a composition bias toward acidic residues.

Interacts with importin alpha. Phosphorylated in the cytosol and extracellular matrix and unphosphorylated in the nucleus. Phosphorylation is necessary for nucleocytoplasmic transport and may be catalyzed by a nuclear isoform of CK2 and can be augmented by calcium. Phosphorylated (in vitro) by FAM20C in the extracellular medium at sites within the S-x-E/pS motif. In terms of tissue distribution, expressed in tooth particularly in odontoblast, ameloblast and cementoblast. Also expressed in bone particularly in osteoblast.

It is found in the nucleus. The protein localises to the cytoplasm. It localises to the secreted. Its subcellular location is the extracellular space. The protein resides in the extracellular matrix. In terms of biological role, may have a dual function during osteoblast differentiation. In the nucleus of undifferentiated osteoblasts, unphosphorylated form acts as a transcriptional component for activation of osteoblast-specific genes like osteocalcin. During the osteoblast to osteocyte transition phase it is phosphorylated and exported into the extracellular matrix, where it regulates nucleation of hydroxyapatite. The sequence is that of Dentin matrix acidic phosphoprotein 1 from Mus musculus (Mouse).